The primary structure comprises 587 residues: Beta-(1--&gt;2)glucan export ATP-binding/permease protein NdvA (587 aa).

The ABC transmembrane type-1 domain maps to 21–301 (VSLVVIANIV…MRQFATQIFE (281 aa)). 6 consecutive transmembrane segments (helical) span residues 23–43 (LVVI…ILFG), 57–77 (PILF…VLVS), 126–146 (LFGL…ALAL), 158–178 (LSAV…VVMS), 248–268 (MAST…VQSG), and 272–292 (IGDV…LDLM). Positions 335–569 (IEFRDVSFGF…NGRFAALLRA (235 aa)) constitute an ABC transporter domain. 368-375 (GPTGAGKT) contacts ATP.

This sequence belongs to the ABC transporter superfamily. Beta-(1--&gt;2)glucan exporter (TC 3.A.1.108.1) family. In terms of assembly, homodimer.

The protein localises to the cell inner membrane. It carries out the reaction [(1-&gt;2)-beta-D-glucosyl](n)(in) + ATP + H2O = [(1-&gt;2)-beta-D-glucosyl](n)(out) + ADP + phosphate + H(+). In terms of biological role, involved in beta-(1--&gt;2)glucan export. Transmembrane domains (TMD) form a pore in the inner membrane and the ATP-binding domain (NBD) is responsible for energy generation. The protein is Beta-(1--&gt;2)glucan export ATP-binding/permease protein NdvA of Rhizobium etli (strain ATCC 51251 / DSM 11541 / JCM 21823 / NBRC 15573 / CFN 42).